The chain runs to 59 residues: Large ribosomal subunit protein bL32c (59 aa).

The segment covering 1 to 19 has biased composition (basic residues); that stretch reads MAVPKKRTSKAKKNARKAN. Residues 1–24 are disordered; sequence MAVPKKRTSKAKKNARKANWKNQA.

It belongs to the bacterial ribosomal protein bL32 family.

It is found in the plastid. Its subcellular location is the chloroplast. This is Large ribosomal subunit protein bL32c (rpl32) from Porphyra purpurea (Red seaweed).